Consider the following 843-residue polypeptide: RNA-binding protein 25 (843 aa).

Positions 1–30 are disordered; that stretch reads MSFPPHLNRPPMGIPALPPGIPPPQFPGFP. Over residues 12–30 the composition is skewed to pro residues; it reads MGIPALPPGIPPPQFPGFP. In terms of domain architecture, RRM spans 87 to 164; that stretch reads TTVFVGNISE…KKLLVKVDAK (78 aa). Position 135 is an N6-acetyllysine (Lys135). 2 disordered regions span residues 171–202 and 219–243; these read EWKA…ETKR and SSEL…KKED. Phosphoserine is present on residues Ser226 and Ser229. Glycyl lysine isopeptide (Lys-Gly) (interchain with G-Cter in SUMO2) cross-links involve residues Lys261, Lys273, and Lys430. Composition is skewed to basic and acidic residues over residues 280–433 and 521–573; these read EISK…KRDR and RLRD…ERRR. Disordered stretches follow at residues 280 to 442 and 498 to 688; these read EISK…DAYE and EFLE…KRKK. The necessary for nuclear speckle localization stretch occupies residues 285-644; it reads RDTHKKLEEE…PNTPGDESPC (360 aa). Lys578 participates in a covalent cross-link: Glycyl lysine isopeptide (Lys-Gly) (interchain with G-Cter in SUMO2). Residue Ser583 is modified to Phosphoserine. Basic and acidic residues predominate over residues 590-599; that stretch reads KQEKEEKREE. The segment covering 621-630 has biased composition (low complexity); sequence SSAPSVSSAS. A Glycyl lysine isopeptide (Lys-Gly) (interchain with G-Cter in SUMO2) cross-link involves residue Lys671. The span at 674 to 683 shows a compositional bias: polar residues; it reads ASNSPGQPNS. Phosphoserine is present on residues Ser677 and Ser683. Residues Lys688 and Lys697 each participate in a glycyl lysine isopeptide (Lys-Gly) (interchain with G-Cter in SUMO2) cross-link. Ser703 is subject to Phosphoserine. A Glycyl lysine isopeptide (Lys-Gly) (interchain with G-Cter in SUMO2) cross-link involves residue Lys722. The 94-residue stretch at 750 to 843 folds into the PWI domain; the sequence is PELFAYPLDW…TEAKKIGLVK (94 aa).

In terms of assembly, interacts with LUC7L3 and SRRM1. Specifically associates with functional splicing complexes, including Sm proteins and U1, U2, U4, U5 and U6 snRNAs. Associates with exon junction complex (EJC) proteins, including APEX1, DDX39B, NCBP1, RBM8A and RNPS1. Interaction with NCBP1 is RNA-dependent. In terms of processing, sumoylated.

It localises to the nucleus speckle. The protein localises to the cytoplasm. Functionally, RNA-binding protein that acts as a regulator of alternative pre-mRNA splicing. Involved in apoptotic cell death through the regulation of the apoptotic factor BCL2L1 isoform expression. Modulates the ratio of proapoptotic BCL2L1 isoform S to antiapoptotic BCL2L1 isoform L mRNA expression. When overexpressed, stimulates proapoptotic BCL2L1 isoform S 5'-splice site (5'-ss) selection, whereas its depletion caused the accumulation of antiapoptotic BCL2L1 isoform L. Promotes BCL2L1 isoform S 5'-ss usage through the 5'-CGGGCA-3' RNA sequence. Its association with LUC7L3 promotes U1 snRNP binding to a weak 5' ss in a 5'-CGGGCA-3'-dependent manner. Binds to the exonic splicing enhancer 5'-CGGGCA-3' RNA sequence located within exon 2 of the BCL2L1 pre-mRNA. Also involved in the generation of an abnormal and truncated splice form of SCN5A in heart failure. The polypeptide is RNA-binding protein 25 (RBM25) (Homo sapiens (Human)).